The sequence spans 193 residues: Putative manganese efflux pump MntP (193 aa).

Helical transmembrane passes span 6–26, 41–61, 65–85, 107–127, 132–152, and 169–189; these read LLGLAVALAMDAFAVAIAVGI, YHFGLFQALMPIIGWALGTGI, TQSYAHWIAFTLLALVGANMI, LIILSLATSIDALAVGLSLSM, IWYPALIIGLVAGAFTLFGML, and VLGGIILWAIGLNILYDNGVF.

This sequence belongs to the MntP (TC 9.B.29) family.

The protein localises to the cell inner membrane. Its function is as follows. Probably functions as a manganese efflux pump. The protein is Putative manganese efflux pump MntP of Desulfotalea psychrophila (strain LSv54 / DSM 12343).